We begin with the raw amino-acid sequence, 241 residues long: MATVSMRDMLKAGVHFGHQTRYWNPKMKPFIFGARNKVHIINLEKTVPMFNEALAELNKIASRKGKILFVGTKRAASEAVKDAANSCDQFFVNHRWLGGMLTNWKTVRQSIKRLKDLETQSQDGTFEKLTKKEALMRTRELEKLENSLGGIKDMGGLPDALFVIDADHEHIAIKEANNLGIPVFAIVDTNSDPDGVDFVIPGNDDAIRAVSLYLGAVAATVREGRSQDLASQAEESFVEAE.

It belongs to the universal ribosomal protein uS2 family.

The chain is Small ribosomal subunit protein uS2 from Citrobacter koseri (strain ATCC BAA-895 / CDC 4225-83 / SGSC4696).